The chain runs to 224 residues: 2-C-methyl-D-erythritol 4-phosphate cytidylyltransferase (224 aa).

The protein belongs to the IspD/TarI cytidylyltransferase family. IspD subfamily.

The enzyme catalyses 2-C-methyl-D-erythritol 4-phosphate + CTP + H(+) = 4-CDP-2-C-methyl-D-erythritol + diphosphate. The protein operates within isoprenoid biosynthesis; isopentenyl diphosphate biosynthesis via DXP pathway; isopentenyl diphosphate from 1-deoxy-D-xylulose 5-phosphate: step 2/6. Its function is as follows. Catalyzes the formation of 4-diphosphocytidyl-2-C-methyl-D-erythritol from CTP and 2-C-methyl-D-erythritol 4-phosphate (MEP). In Bordetella petrii (strain ATCC BAA-461 / DSM 12804 / CCUG 43448), this protein is 2-C-methyl-D-erythritol 4-phosphate cytidylyltransferase.